The sequence spans 689 residues: MSKRRKHSWPQPLKGAESRLWYGGDYNPDQWPEEVWDDDIRLMKKAGVNLVSVGIFSWAKIEPEEGKYDFDWLDRAIDKLGKAGIAVDLASATASPPMWLTQAHPEVLWKDERGDTVWPGAREHWRPTSPVFREYALNLCRRMAEHYKGNPYVVAWHVSNEYGCHNRFDYSDDAMRAFQKWCKKRYKTIDAVNEAWGTAFWAQHMNDFSEIIPPRYIGDGNFMNPGKLLDYKRFSSDALKELYIAERDVLESITPGLPLTTNFMVSAGGSMLDYDDWGAEVDFVSNDHYFTPGEAHFDEVAYAASLMDGISRKEPWFQMEHSTSAVNWRPINYRAEPGSVVRDSLAQVAMGADAICYFQWRQSKAGAEKWHSSMVPHAGEDSQIFRDVCELGADLGRLSDEGLMGTKTVKSKVAVVFDYESQWATEYTANPTQQVDHWTEPLDWFRALADNGITADVVPVRSDWDSYEIAVLPCVYLLSEETSRRVREFVANGGKLFVTYYTGLSDENDHIWLGGYPGSIRDVVGVRVEEFAPMGNDMPGALDHLDLDNGTVAHDFADVITSTADTSTVLASYKAERWTGMNEVPAIVANGYGDGRTVYVGCRLGRQGLAKSLPAMLGSMGLSDLAGDGRVLRVERADAAAANHFEFVFNRTHEPVTVDVEGEAIAASLAHVDDGRATIDPTGVVVLRR.

Substrate is bound by residues R122 and N160. E161 functions as the Proton donor in the catalytic mechanism. Catalysis depends on E320, which acts as the Nucleophile. Substrate is bound by residues W328 and 368–371 (EKWH).

The protein belongs to the glycosyl hydrolase 42 family.

The catalysed reaction is Hydrolysis of terminal non-reducing beta-D-galactose residues in beta-D-galactosides.. In Bifidobacterium bifidum (strain DSM 20082 / JCM 1254 / BCRC 11844 / KCTC 3440 / E319f (Variant a)), this protein is Beta-galactosidase BbgII.